Here is a 251-residue protein sequence, read N- to C-terminus: Ditrans,polycis-undecaprenyl-diphosphate synthase ((2E,6E)-farnesyl-diphosphate specific) (251 aa).

Asp-20 is an active-site residue. A Mg(2+)-binding site is contributed by Asp-20. Substrate-binding positions include Gly-21 to Arg-24, Trp-25, Arg-33, His-37, and Ser-65 to Glu-67. The active-site Proton acceptor is the Asn-68. Residues Trp-69, Arg-71, Arg-188, and Arg-194–Ser-196 each bind substrate. Glu-207 lines the Mg(2+) pocket.

The protein belongs to the UPP synthase family. Homodimer. Mg(2+) is required as a cofactor.

The enzyme catalyses 8 isopentenyl diphosphate + (2E,6E)-farnesyl diphosphate = di-trans,octa-cis-undecaprenyl diphosphate + 8 diphosphate. Functionally, catalyzes the sequential condensation of isopentenyl diphosphate (IPP) with (2E,6E)-farnesyl diphosphate (E,E-FPP) to yield (2Z,6Z,10Z,14Z,18Z,22Z,26Z,30Z,34E,38E)-undecaprenyl diphosphate (di-trans,octa-cis-UPP). UPP is the precursor of glycosyl carrier lipid in the biosynthesis of bacterial cell wall polysaccharide components such as peptidoglycan and lipopolysaccharide. The protein is Ditrans,polycis-undecaprenyl-diphosphate synthase ((2E,6E)-farnesyl-diphosphate specific) of Vibrio parahaemolyticus serotype O3:K6 (strain RIMD 2210633).